The primary structure comprises 142 residues: Putative pre-16S rRNA nuclease (142 aa).

The protein belongs to the YqgF nuclease family.

The protein resides in the cytoplasm. In terms of biological role, could be a nuclease involved in processing of the 5'-end of pre-16S rRNA. The sequence is that of Putative pre-16S rRNA nuclease from Blochmanniella floridana.